Reading from the N-terminus, the 107-residue chain is MSHQKIIQDLIAWIDEHIDQPLNIDVVAKKSGYSKWYLQRMFRTVTHQTLGDYIRQRRLLLAAVELRTTERPIFDIAMDLGYVSQQTFSRVFRRQFDRTPSDYRHRL.

An HTH araC/xylS-type domain is found at glutamine 8–arginine 106. 2 DNA-binding regions (H-T-H motif) span residues aspartate 25–threonine 46 and isoleucine 73–phenylalanine 96.

The protein localises to the cytoplasm. Transcriptional activator of the superoxide response regulon of E.coli that includes at least 10 genes such as sodA, nfo, zwf and micF. Binds the DNA sequence 5'-GCACN(7)CAA-3'. It also facilitates the subsequent binding of RNA polymerase to the micF and the nfo promoters. The polypeptide is Regulatory protein SoxS (soxS) (Escherichia coli O157:H7).